The following is a 314-amino-acid chain: DNA-directed RNA polymerase subunit alpha (314 aa).

The tract at residues 1-228 is alpha N-terminal domain (alpha-NTD); the sequence is MIEIEKPRIE…EHLNIFVGLT (228 aa). The segment at 245–314 is alpha C-terminal domain (alpha-CTD); sequence KEKVLEMSIE…DLGLGLRKED (70 aa).

This sequence belongs to the RNA polymerase alpha chain family. Homodimer. The RNAP catalytic core consists of 2 alpha, 1 beta, 1 beta' and 1 omega subunit. When a sigma factor is associated with the core the holoenzyme is formed, which can initiate transcription.

The catalysed reaction is RNA(n) + a ribonucleoside 5'-triphosphate = RNA(n+1) + diphosphate. In terms of biological role, DNA-dependent RNA polymerase catalyzes the transcription of DNA into RNA using the four ribonucleoside triphosphates as substrates. In Staphylococcus aureus (strain bovine RF122 / ET3-1), this protein is DNA-directed RNA polymerase subunit alpha.